Here is a 299-residue protein sequence, read N- to C-terminus: Acetaldehyde dehydrogenase 2 (299 aa).

Cysteine 130 functions as the Acyl-thioester intermediate in the catalytic mechanism. NAD(+) is bound by residues 161–169 (SVGPGTRKN) and asparagine 272.

Belongs to the acetaldehyde dehydrogenase family.

The catalysed reaction is acetaldehyde + NAD(+) + CoA = acetyl-CoA + NADH + H(+). This is Acetaldehyde dehydrogenase 2 from Burkholderia lata (strain ATCC 17760 / DSM 23089 / LMG 22485 / NCIMB 9086 / R18194 / 383).